We begin with the raw amino-acid sequence, 255 residues long: Hemin import ATP-binding protein HmuV (255 aa).

The ABC transporter domain occupies 2–238 (LRVENLSIRR…EPLRAVFGLE (237 aa)). 34-41 (GPNGAGKS) contributes to the ATP binding site.

Belongs to the ABC transporter superfamily. Heme (hemin) importer (TC 3.A.1.14.5) family. In terms of assembly, the complex is composed of two ATP-binding proteins (HmuV), two transmembrane proteins (HmuU) and a solute-binding protein (HmuT).

Its subcellular location is the cell inner membrane. In terms of biological role, part of the ABC transporter complex HmuTUV involved in hemin import. Responsible for energy coupling to the transport system. This Pseudomonas aeruginosa (strain ATCC 15692 / DSM 22644 / CIP 104116 / JCM 14847 / LMG 12228 / 1C / PRS 101 / PAO1) protein is Hemin import ATP-binding protein HmuV.